We begin with the raw amino-acid sequence, 518 residues long: Laccase (518 aa).

An N-terminal signal peptide occupies residues 1-21 (MSRFQSLLSFVLVSLAAVANA). Plastocyanin-like domains lie at 23-148 (IGPV…FVVY) and 160-302 (IDND…ILRY). Residues Asn-72 and Asn-75 are each glycosylated (N-linked (GlcNAc...) asparagine). Residues His-85, His-87, His-130, and His-132 each coordinate Cu cation. Cystine bridges form between Cys-106-Cys-507 and Cys-138-Cys-226. Asn-229 is a glycosylation site (N-linked (GlcNAc...) asparagine). Residues 308–330 (VEPTTTQTTSTKPLNEADLHPLT) are disordered. N-linked (GlcNAc...) asparagine glycosylation is found at Asn-354, Asn-362, and Asn-398. Residues 369–489 (SVPVLLQILS…AGFAVVLAED (121 aa)) form the Plastocyanin-like 3 domain. Cu cation-binding residues include His-416, His-419, His-421, His-471, Cys-472, His-473, and His-477.

It belongs to the multicopper oxidase family. Requires Cu cation as cofactor.

The protein resides in the secreted. It carries out the reaction 4 hydroquinone + O2 = 4 benzosemiquinone + 2 H2O. Functionally, lignin degradation and detoxification of lignin-derived products. Cleaves the C-C and C-O bonds of some phenolic lignin model compounds (such as O- and P-quinols, aminophenols and phenylenediamine). May also be involved in synthesis of phenoxazinone pigments. This is Laccase (LCC3-1) from Pycnoporus cinnabarinus (Cinnabar-red polypore).